Consider the following 1567-residue polypeptide: Ice nucleation protein (1567 aa).

Residues Pro-130–Ala-185 are compositionally biased toward low complexity. Disordered stretches follow at residues Pro-130 to Asp-195, Tyr-270 to Asp-329, Ala-356 to Val-378, Thr-449 to Ile-474, Ser-502 to Thr-529, Gln-594 to Ala-620, Gln-642 to Ala-668, Thr-689 to Ala-716, Gln-738 to Ala-764, Thr-785 to Ile-810, Thr-833 to Ala-860, Thr-929 to Gly-959, and Thr-977 to Ala-1004. Residues Tyr-270 to Leu-282 are compositionally biased toward polar residues. The span at Thr-283–Ser-296 shows a compositional bias: low complexity. Polar residues-rich tracts occupy residues Tyr-302–Arg-325, Ala-356–Arg-373, Thr-449–Arg-469, and Ser-502–Asp-519. The segment covering Ser-520 to Thr-529 has biased composition (low complexity). Polar residues-rich tracts occupy residues Gln-594–Arg-613, Gln-642–Arg-661, Thr-689–Arg-709, Gln-738–Arg-757, Thr-785–Arg-805, Thr-833–Arg-853, Thr-929–Arg-949, and Thr-977–Arg-997.

The protein belongs to the bacterial ice nucleation protein family.

It localises to the cell outer membrane. Ice nucleation proteins enable bacteria to nucleate crystallization in supercooled water. This Xanthomonas campestris pv. translucens protein is Ice nucleation protein (inaX).